Reading from the N-terminus, the 206-residue chain is Ribosomal RNA large subunit methyltransferase E (206 aa).

Residues glycine 60, tryptophan 62, aspartate 80, aspartate 96, and aspartate 121 each contribute to the S-adenosyl-L-methionine site. Lysine 161 acts as the Proton acceptor in catalysis.

It belongs to the class I-like SAM-binding methyltransferase superfamily. RNA methyltransferase RlmE family.

It is found in the cytoplasm. The enzyme catalyses uridine(2552) in 23S rRNA + S-adenosyl-L-methionine = 2'-O-methyluridine(2552) in 23S rRNA + S-adenosyl-L-homocysteine + H(+). Its function is as follows. Specifically methylates the uridine in position 2552 of 23S rRNA at the 2'-O position of the ribose in the fully assembled 50S ribosomal subunit. This Hahella chejuensis (strain KCTC 2396) protein is Ribosomal RNA large subunit methyltransferase E.